Here is a 181-residue protein sequence, read N- to C-terminus: Biofilm-surface layer protein A (181 aa).

The N-terminal stretch at 1–28 (MKRKLLSSLAISALSLGLLVSAPTASFA) is a signal peptide.

Belongs to the BslA/BslB family. Forms polymers.

The protein resides in the secreted. It is found in the cell wall. In terms of biological role, involved in biofilm formation. Self-polymerizes and forms a layer on the surface of biofilms that confers hydrophobicity to the biofilm. The layer is stable and capable of resistance to high mechanical force compression. Required for complex colony architecture. May function synergistically with exopolysaccharides and TasA amyloid fibers to facilitate the assembly of the biofilm matrix. The sequence is that of Biofilm-surface layer protein A from Bacillus subtilis (strain 168).